A 708-amino-acid polypeptide reads, in one-letter code: Retrotransposon-derived protein PEG10 (708 aa).

Residues 1 to 50 (MTERRRDELSEEINNLREKVMKQSEENNNLQSQVQKLTEENTTLREQVEP) are a coiled coil. A disordered region spans residues 21-74 (MKQSEENNNLQSQVQKLTEENTTLREQVEPTPEDEDDDIELRGAAAAAAPPPPI). The span at 26–36 (ENNNLQSQVQK) shows a compositional bias: polar residues. Positions 37–48 (LTEENTTLREQV) are enriched in basic and acidic residues. The interval 76 to 275 (EECPEDLPEK…HQVDPTEPVG (200 aa)) is necessary for interaction with ACVRL1. Residues 293 to 310 (NLCLYCGTGGHYADNCPA) form a CCHC-type zinc finger. The tract at residues 310–344 (AKASKSSPAGKLPGPAVEGPSATGPEIIRSPQDDA) is disordered. Residues Lys-311 and Lys-314 each participate in a glycyl lysine isopeptide (Lys-Gly) (interchain with G-Cter in ubiquitin) cross-link. Phosphoserine occurs at positions 316 and 321. Omega-N-methylarginine is present on residues Arg-507, Arg-598, and Arg-611. The tract at residues 683–708 (PVPQYPPPQPPPPPPPPPPPPSYSTL) is disordered.

As to quaternary structure, homooligomer; homooligomerizes into virion-like capsids. Interacts with ACVRL1. Interacts with SIAH1 and SIAH2. Undergoes proteolytic cleavage. In terms of tissue distribution, expressed in the cytotrophoblast layer but not in the overlying syncytiotrophoblast of the placenta. Expressed in prostate and breast carcinomas but not in normal breast and prostate epithelial cells. Expressed in the Hep-G2 cell line (at protein level). Expressed in brain, liver, spleen, kidney, thymus, lung, ovary, testis, reactive lymph node, skeletal muscle, adipose tissue and placenta. Expressed in pancreatic and hepatocellular carcinomas (HCC).

It localises to the extracellular vesicle membrane. It is found in the cytoplasm. Its subcellular location is the nucleus. Its function is as follows. Retrotransposon-derived protein that binds its own mRNA and self-assembles into virion-like capsids. Forms virion-like extracellular vesicles that encapsulate their own mRNA and are released from cells, enabling intercellular transfer of PEG10 mRNA. Binds its own mRNA in the 5'-UTR region, in the region near the boundary between the nucleocapsid (NC) and protease (PRO) coding sequences and in the beginning of the 3'-UTR region. Involved in placenta formation: required for trophoblast stem cells differentiation. Involved at the immediate early stage of adipocyte differentiation. Overexpressed in many cancers and enhances tumor progression: promotes cell proliferation by driving cell cycle progression from G0/G1. Enhances cancer progression by inhibiting the TGF-beta signaling, possibly via interaction with the TGF-beta receptor ACVRL1. May bind to the 5'-GCCTGTCTTT-3' DNA sequence of the MB1 domain in the myelin basic protein (MBP) promoter; additional evidences are however required to confirm this result. This is Retrotransposon-derived protein PEG10 from Homo sapiens (Human).